The chain runs to 874 residues: Probable inorganic carbon transporter subunit DabA (874 aa).

4 residues coordinate Zn(2+): Cys-398, Asp-400, His-580, and Cys-595.

The protein belongs to the inorganic carbon transporter (TC 9.A.2) DabA family. As to quaternary structure, forms a complex with DabB. Zn(2+) is required as a cofactor.

The protein localises to the cell membrane. Its function is as follows. Part of an energy-coupled inorganic carbon pump. The polypeptide is Probable inorganic carbon transporter subunit DabA (Bacillus cereus (strain 03BB102)).